We begin with the raw amino-acid sequence, 424 residues long: Deoxyguanosinetriphosphate triphosphohydrolase-like protein (424 aa).

The segment covering 1–10 (MEGTAPPTPY) has biased composition (pro residues). The interval 1–31 (MEGTAPPTPYDPASVARYAPEPDKRPGRTAF) is disordered. Basic and acidic residues predominate over residues 20 to 31 (PEPDKRPGRTAF). An HD domain is found at 70–220 (RLTHSLECAQ…MDWADDVAYS (151 aa)).

It belongs to the dGTPase family. Type 2 subfamily.

The protein is Deoxyguanosinetriphosphate triphosphohydrolase-like protein of Streptomyces coelicolor (strain ATCC BAA-471 / A3(2) / M145).